The sequence spans 638 residues: Methyl-accepting chemotaxis protein McpQ (638 aa).

A helical membrane pass occupies residues 18-38; the sequence is LGLGFGLVLLLTLAITLTGWH. One can recognise an HBM domain in the interval 45-282; sequence DRGDKLGNIS…SQTEVRDAAA (238 aa). A helical membrane pass occupies residues 287–307; that stretch reads TLLTVATVLALALGLLAAWAI. The HAMP domain occupies 309-361; it reads RQIIIPLRQTLRAAERVASGDLTQSLQVQRRDELGQLQASMHRMTQGLRELIG. Residues 366 to 602 enclose the Methyl-accepting transducer domain; it reads GVTQIASAAE…EINRSVMNVR (237 aa).

The protein belongs to the methyl-accepting chemotaxis (MCP) protein family.

The protein resides in the cell membrane. Its function is as follows. Chemotactic-signal transducers respond to changes in the concentration of attractants and repellents in the environment, transduce a signal from the outside to the inside of the cell, and facilitate sensory adaptation through the variation of the level of methylation. McpQ recognizes specifically citrate and citrate/metal(2+) complexes. Binds citrate/metal(2+) complexes with higher affinity than free citrate, and mediates preferentially chemotaxis toward citrate/metal(2+) complexes. This chain is Methyl-accepting chemotaxis protein McpQ, found in Pseudomonas putida (strain ATCC 47054 / DSM 6125 / CFBP 8728 / NCIMB 11950 / KT2440).